The chain runs to 184 residues: Ribosome-recycling factor (184 aa).

The protein belongs to the RRF family.

The protein resides in the cytoplasm. In terms of biological role, responsible for the release of ribosomes from messenger RNA at the termination of protein biosynthesis. May increase the efficiency of translation by recycling ribosomes from one round of translation to another. This Acinetobacter baumannii (strain SDF) protein is Ribosome-recycling factor.